The sequence spans 377 residues: Lipoyl synthase, mitochondrial (377 aa).

7 residues coordinate [4Fe-4S] cluster: Cys103, Cys108, Cys114, Cys134, Cys138, Cys141, and Ser349. The 220-residue stretch at 119 to 338 (EHGTQTATIM…EERGNELGFL (220 aa)) folds into the Radical SAM core domain.

It belongs to the radical SAM superfamily. Lipoyl synthase family. Requires [4Fe-4S] cluster as cofactor.

It is found in the mitochondrion. The catalysed reaction is [[Fe-S] cluster scaffold protein carrying a second [4Fe-4S](2+) cluster] + N(6)-octanoyl-L-lysyl-[protein] + 2 oxidized [2Fe-2S]-[ferredoxin] + 2 S-adenosyl-L-methionine + 4 H(+) = [[Fe-S] cluster scaffold protein] + N(6)-[(R)-dihydrolipoyl]-L-lysyl-[protein] + 4 Fe(3+) + 2 hydrogen sulfide + 2 5'-deoxyadenosine + 2 L-methionine + 2 reduced [2Fe-2S]-[ferredoxin]. It participates in protein modification; protein lipoylation via endogenous pathway; protein N(6)-(lipoyl)lysine from octanoyl-[acyl-carrier-protein]: step 2/2. Functionally, catalyzes the radical-mediated insertion of two sulfur atoms into the C-6 and C-8 positions of the octanoyl moiety bound to the lipoyl domains of lipoate-dependent enzymes, thereby converting the octanoylated domains into lipoylated derivatives. This Drosophila sechellia (Fruit fly) protein is Lipoyl synthase, mitochondrial.